Here is a 102-residue protein sequence, read N- to C-terminus: Large ribosomal subunit protein bL21 (102 aa).

Belongs to the bacterial ribosomal protein bL21 family. As to quaternary structure, part of the 50S ribosomal subunit. Contacts protein L20.

In terms of biological role, this protein binds to 23S rRNA in the presence of protein L20. This Bifidobacterium animalis subsp. lactis (strain AD011) protein is Large ribosomal subunit protein bL21.